The chain runs to 430 residues: Pre-B-cell leukemia transcription factor 1 (430 aa).

The tract at residues 1 to 40 (MDEQPRLMHSHAGVGMAGHPGLSQHLQDGAGGTEGEGGRK) is disordered. Residues 38 to 232 (GRKQDIGDIL…VMILRSRFLD (195 aa)) form the PBC domain. Residues 45–124 (DILQQIMTIT…EGVAGPEKGG (80 aa)) form a PBC-A region. The PBC-B stretch occupies residues 127–232 (AAAAAAAAAS…VMILRSRFLD (106 aa)). Residues 233–295 (ARRKRRNFNK…NKRIRYKKNI (63 aa)) constitute a DNA-binding region (homeobox; TALE-type). 2 disordered regions span residues 317–338 (SAHG…SSSF) and 395–430 (SPQG…DTSN). Positions 323 to 338 (ANSPSTPNSAGSSSSF) are enriched in low complexity. A compositionally biased stretch (polar residues) spans 407-418 (DATTPSSVTSPT).

The protein belongs to the TALE/PBX homeobox family. As to quaternary structure, forms a heterodimer with MEIS1 which binds DNA. The PBX1-MEIS1 heterodimer binds a cAMP-responsive sequence in CYP17. It also binds a consensus region in the SOX3 promoter. PBX1 forms heterotrimers with MEIS1 and a number of HOX proteins including HOXA9, HOXD4, HOXD9 and HOXD10. Forms heterodimers with HOXA1, HOXA5, HOXB7 and HOXB8 which bind the 5'-TGATTGAT-3' consensus sequence. Also forms heterodimers with HOXA5, HOXB7, HOXB8, HOXC8 and HOXD4 which bind the 5'-ATCAATCAA-3' consensus sequence. Interacts with PBXIP1. Interacts with TLX1. Interacts with FOXC1. Interacts with MN1. In terms of assembly, interacts with MEIS2 isoform 4, SP1, SP3 and KLF4. Part of a PDX1:PBX1b:MEIS2B complex; PBX1b recruits MEIS2B to the complex. As to expression, expressed in the kidney. Expressed in the endothelial cells of the glomeruli and interstitium (at protein level). Expressed in all tissues except in cells of the B and T lineage. Expressed strongly in kidney and brain.

Its subcellular location is the nucleus. Functionally, transcription factor which binds the DNA sequence 5'-TGATTGAT-3' as part of a heterodimer with HOX proteins such as HOXA1, HOXA5, HOXB7 and HOXB8. Binds to the DNA sequence 5'-TGATTGAC-3' in complex with a nuclear factor which is not a class I HOX protein. Has also been shown to bind the DNA sequence 5'-ATCAATCAA-3' cooperatively with HOXA5, HOXB7, HOXB8, HOXC8 and HOXD4. Acts as a transcriptional activator of PF4 in complex with MEIS1. Also activates transcription of SOX3 in complex with MEIS1 by binding to the 5'-TGATTGAC-3' consensus sequence. In natural killer cells, binds to the NFIL3 promoter and acts as a transcriptional activator of NFIL3, promoting natural killer cell development. Plays a role in the cAMP-dependent regulation of CYP17A1 gene expression via its cAMP-regulatory sequence (CRS1). Probably in complex with MEIS2, involved in transcriptional regulation by KLF4. Acts as a transcriptional activator of NKX2-5 and a transcriptional repressor of CDKN2B. Together with NKX2-5, required for spleen development through a mechanism that involves CDKN2B repression. In terms of biological role, as part of a PDX1:PBX1b:MEIS2B complex in pancreatic acinar cells, is involved in the transcriptional activation of the ELA1 enhancer; the complex binds to the enhancer B element and cooperates with the transcription factor 1 complex (PTF1) bound to the enhancer A element. The polypeptide is Pre-B-cell leukemia transcription factor 1 (PBX1) (Homo sapiens (Human)).